The following is a 359-amino-acid chain: tRNA-specific 2-thiouridylase MnmA (359 aa).

ATP-binding positions include 10-17 (GISGGVDS) and Leu36. Cys101 serves as the catalytic Nucleophile. Residues Cys101 and Cys197 are joined by a disulfide bond. Gly125 serves as a coordination point for ATP. An interaction with tRNA region spans residues 147–149 (KDQ). The active-site Cysteine persulfide intermediate is Cys197. An interaction with tRNA region spans residues 306-307 (RY).

Belongs to the MnmA/TRMU family.

The protein resides in the cytoplasm. It catalyses the reaction S-sulfanyl-L-cysteinyl-[protein] + uridine(34) in tRNA + AH2 + ATP = 2-thiouridine(34) in tRNA + L-cysteinyl-[protein] + A + AMP + diphosphate + H(+). Catalyzes the 2-thiolation of uridine at the wobble position (U34) of tRNA, leading to the formation of s(2)U34. In Chlorobium chlorochromatii (strain CaD3), this protein is tRNA-specific 2-thiouridylase MnmA.